The sequence spans 622 residues: TAF6-like RNA polymerase II p300/CBP-associated factor-associated factor 65 kDa subunit 6L (622 aa).

2 disordered regions span residues 403 to 430 (QESS…GPED) and 457 to 546 (GTGQ…TRDV). 2 positions are modified to phosphoserine: Ser-495 and Ser-501. Residues 511-522 (ASASGPAASESR) show a composition bias toward low complexity. Asymmetric dimethylarginine is present on residues Arg-555, Arg-561, and Arg-593.

This sequence belongs to the TAF6 family. In terms of assembly, the PCAF complex is composed of a number of TBP-associated factors (TAFS), such as TAF5, TAF5L, TAF6, TAF6L, TAF9, TAF10 and TAF12, PCAF, and also PCAF-associated factors (PAFs), such as TADA2L/ADA2, TADA3L/ADA3 and SPT3. Component of the STAGA transcription coactivator-HAT complex, at least composed of SUPT3H, GCN5L2, TAF5L, TAF6L, SUPT7L, TADA3L, TAD1L, TAF10, TAF12, TRRAP and TAF9.

It localises to the nucleus. Functions as a component of the PCAF complex. The PCAF complex is capable of efficiently acetylating histones in a nucleosomal context. The PCAF complex could be considered as the human version of the yeast SAGA complex. With TAF5L, acts as an epigenetic regulator essential for somatic reprogramming. Regulates target genes through H3K9ac deposition and MYC recruitment which trigger MYC regulatory network to orchestrate gene expression programs to control embryonic stem cell state. Functions with MYC to activate target gene expression through RNA polymerase II pause release. The polypeptide is TAF6-like RNA polymerase II p300/CBP-associated factor-associated factor 65 kDa subunit 6L (Homo sapiens (Human)).